The primary structure comprises 114 residues: Fluoride-specific ion channel FluC 2 (114 aa).

3 consecutive transmembrane segments (helical) span residues 30-50 (FPVA…LLSG), 57-77 (TFAL…TFAV), and 88-108 (ALPS…AAWL). 2 residues coordinate Na(+): Gly67 and Thr70.

Belongs to the fluoride channel Fluc/FEX (TC 1.A.43) family.

It is found in the cell membrane. It catalyses the reaction fluoride(in) = fluoride(out). Na(+) is not transported, but it plays an essential structural role and its presence is essential for fluoride channel function. In terms of biological role, fluoride-specific ion channel. Important for reducing fluoride concentration in the cell, thus reducing its toxicity. In Rhodococcus jostii (strain RHA1), this protein is Fluoride-specific ion channel FluC 2.